A 100-amino-acid chain; its full sequence is NADH-quinone oxidoreductase subunit K (100 aa).

A run of 3 helical transmembrane segments spans residues 4–24 (LTHG…GLVI), 28–48 (LLFM…AFVV), and 60–80 (VMYI…LALL).

Belongs to the complex I subunit 4L family. As to quaternary structure, NDH-1 is composed of 13 different subunits. Subunits NuoA, H, J, K, L, M, N constitute the membrane sector of the complex.

It is found in the cell inner membrane. It carries out the reaction a quinone + NADH + 5 H(+)(in) = a quinol + NAD(+) + 4 H(+)(out). NDH-1 shuttles electrons from NADH, via FMN and iron-sulfur (Fe-S) centers, to quinones in the respiratory chain. The immediate electron acceptor for the enzyme in this species is believed to be ubiquinone. Couples the redox reaction to proton translocation (for every two electrons transferred, four hydrogen ions are translocated across the cytoplasmic membrane), and thus conserves the redox energy in a proton gradient. The sequence is that of NADH-quinone oxidoreductase subunit K from Enterobacter sp. (strain 638).